The following is a 359-amino-acid chain: Probable dual-specificity RNA methyltransferase RlmN (359 aa).

Glu-91 acts as the Proton acceptor in catalysis. The 233-residue stretch at 97-329 (QHYGHSVCVT…KKNGVNCVVR (233 aa)) folds into the Radical SAM core domain. A disulfide bridge connects residues Cys-104 and Cys-340. Positions 111, 115, and 118 each coordinate [4Fe-4S] cluster. S-adenosyl-L-methionine-binding positions include 163–164 (GE), Ser-195, 218–220 (SLH), and Asn-296. Cys-340 acts as the S-methylcysteine intermediate in catalysis.

It belongs to the radical SAM superfamily. RlmN family. [4Fe-4S] cluster serves as cofactor.

It localises to the cytoplasm. It catalyses the reaction adenosine(2503) in 23S rRNA + 2 reduced [2Fe-2S]-[ferredoxin] + 2 S-adenosyl-L-methionine = 2-methyladenosine(2503) in 23S rRNA + 5'-deoxyadenosine + L-methionine + 2 oxidized [2Fe-2S]-[ferredoxin] + S-adenosyl-L-homocysteine. The enzyme catalyses adenosine(37) in tRNA + 2 reduced [2Fe-2S]-[ferredoxin] + 2 S-adenosyl-L-methionine = 2-methyladenosine(37) in tRNA + 5'-deoxyadenosine + L-methionine + 2 oxidized [2Fe-2S]-[ferredoxin] + S-adenosyl-L-homocysteine. Specifically methylates position 2 of adenine 2503 in 23S rRNA and position 2 of adenine 37 in tRNAs. This Streptococcus pyogenes serotype M2 (strain MGAS10270) protein is Probable dual-specificity RNA methyltransferase RlmN.